The sequence spans 263 residues: tRNA (guanine-N(7)-)-methyltransferase (263 aa).

The interval 1-39 (MVHHGQMHAQPGVGLRPDTPVASGQLPSTSIRSRRSGIS) is disordered. Glutamate 82, aspartate 107, asparagine 136, and aspartate 159 together coordinate S-adenosyl-L-methionine. Residue aspartate 159 is part of the active site. Residues lysine 163, aspartate 195, and 232-235 (TKYE) each bind substrate.

This sequence belongs to the class I-like SAM-binding methyltransferase superfamily. TrmB family.

It catalyses the reaction guanosine(46) in tRNA + S-adenosyl-L-methionine = N(7)-methylguanosine(46) in tRNA + S-adenosyl-L-homocysteine. Its pathway is tRNA modification; N(7)-methylguanine-tRNA biosynthesis. Functionally, catalyzes the formation of N(7)-methylguanine at position 46 (m7G46) in tRNA. The sequence is that of tRNA (guanine-N(7)-)-methyltransferase from Mycobacterium bovis (strain ATCC BAA-935 / AF2122/97).